The primary structure comprises 139 residues: MNIEEIMKILPHRYPFLLVDGVLELNEEKIKAFKNVSINESFFQGHFPNYPIMPGVLIVEGMAQTAGLLLLKDTDENVIPLFTGIDKARFKKEVRPGDKLIYDLEILQKKANMFKLKGIATVEEQVCAQAEIMVGIKKS.

H46 is a catalytic residue.

It belongs to the thioester dehydratase family. FabZ subfamily.

It is found in the cytoplasm. The catalysed reaction is a (3R)-hydroxyacyl-[ACP] = a (2E)-enoyl-[ACP] + H2O. Involved in unsaturated fatty acids biosynthesis. Catalyzes the dehydration of short chain beta-hydroxyacyl-ACPs and long chain saturated and unsaturated beta-hydroxyacyl-ACPs. The polypeptide is 3-hydroxyacyl-[acyl-carrier-protein] dehydratase FabZ (Petrotoga mobilis (strain DSM 10674 / SJ95)).